We begin with the raw amino-acid sequence, 303 residues long: Recombination-associated protein RdgC (303 aa).

It belongs to the RdgC family.

It is found in the cytoplasm. The protein localises to the nucleoid. Functionally, may be involved in recombination. The polypeptide is Recombination-associated protein RdgC (Aeromonas hydrophila subsp. hydrophila (strain ATCC 7966 / DSM 30187 / BCRC 13018 / CCUG 14551 / JCM 1027 / KCTC 2358 / NCIMB 9240 / NCTC 8049)).